A 524-amino-acid polypeptide reads, in one-letter code: Calcium-dependent protein kinase 1 (524 aa).

Positions 1-34 (MGCSQSSNVKDFKTRRSKFTNGNNYGKSGNNKNS) are disordered. G2 is lipidated: N-myristoyl glycine. C3 carries the S-palmitoyl cysteine lipid modification. Residues 10–20 (KDFKTRRSKFT) carry the Basic cluster involved in membrane binding motif. Phosphoserine; by autocatalysis occurs at positions 17, 28, and 34. Over residues 21 to 32 (NGNNYGKSGNNK) the composition is skewed to low complexity. The Protein kinase domain maps to 56–325 (YFKVRKLGSG…AKEALNSKWI (270 aa)). ATP-binding positions include 62–70 (LGSGAYGEV) and K85. The residue at position 64 (S64) is a Phosphoserine; by PKG; by autocatalysis. T100 is modified (phosphothreonine; by autocatalysis). S118 carries the phosphoserine; by autocatalysis modification. D191 serves as the catalytic Proton acceptor. A Phosphoserine modification is found at S217. S220 carries the post-translational modification Phosphoserine; by autocatalysis. T231 is modified (phosphothreonine; by PKG; by autocatalysis). At S335 the chain carries Phosphoserine; by autocatalysis. A J domain autoinhibitory motif motif is present at residues 346–353 (NMRKFEGS). Residues 346–364 (NMRKFEGSQKLAQAAILFI) form a j domain region. Residues 354–364 (QKLAQAAILFI) carry the J domain interacts with the EF-hand domains motif. EF-hand domains lie at 372–407 (EERK…LRSF), 416–451 (NVEE…KQIL), 452–487 (FSEE…TSIS), and 488–521 (EQMW…ICDN). Ca(2+) contacts are provided by D385, N387, D389, Q391, E396, D429, D431, N433, Y435, E440, D465, D467, S469, K471, E476, D499, N501, D503, M505, and E510.

It belongs to the protein kinase superfamily. Ser/Thr protein kinase family. CDPK subfamily. In terms of assembly, monomer. Forms a high molecular weight (250 and 400 kDa) complex. Forms a complex composed of CDPK1, PKA regulatory subunit PKAr and 14-3-3I; the complex is formed in merozoites in response to low extracellular level of K(+) and may play a role in microneme secretion. Interacts (when phosphorylated) with 14-3-3I in a Ca(2+)-independent manner; the interaction does not regulate CDPK1 catalytic activity but is required for merozoite invasion of host erythrocytes. Interacts with PKA regulatory subunit PKAr; in a Ca(2+)-dependent manner. Interacts with SERA5 p50 in the late schizont stage. Interacts with inner membrane complex protein IMC1g in late schizonts. Interacts with rhoptry protein RhopH3 in merozoites. The cofactor is Mg(2+). In terms of processing, myristoylated. Myristoylation, palmitoylation and the basic cluster motif are required for the localization to the parasitophorous vacuole membrane. Palmitoylated. Palmitoylation increases in merozoites in response to low level of extracellular K(+) in the host blood. Myristoylation, palmitoylation and the basic cluster motif are required for the localization to the parasitophorous vacuole membrane. Post-translationally, phosphorylation at Ser-64 occurs at late schizont stage and regulates CDPK1 protein-protein interaction. Phosphorylated at Ser-28, Ser-34 and Ser-64 in merozoites in response to low extracellular level of K(+). Phosphorylation at Thr-231 may regulate CDPK1 kinase activity. Phosphorylation increases in response to an increase in intracellular Ca(2+) levels. Autophosphorylated in vitro. Autophosphorylation does not affect membrane localization in vitro.

The protein localises to the membrane. The protein resides in the cell membrane. It is found in the parasitophorous vacuole membrane. Its subcellular location is the cytoplasm. It localises to the cell projection. The protein localises to the cilium. The protein resides in the flagellum. It is found in the host cell membrane. It carries out the reaction L-seryl-[protein] + ATP = O-phospho-L-seryl-[protein] + ADP + H(+). It catalyses the reaction L-threonyl-[protein] + ATP = O-phospho-L-threonyl-[protein] + ADP + H(+). With respect to regulation, activated by calcium. Upon calcium binding to the EF-hand domains, the C-terminus of the junction domain (J domain) undergoes a conformational change which results in the dissociation of the pseudo-substrate inhibitory motif from the catalytic domain. This, in turn may facilitate the autophosphorylation of the activation loop at Thr-231, which leads to the kinase activation. May be negatively regulated by PKA-mediated phosphorylation. Inhibited by purfalcamine. In terms of biological role, calcium-dependent protein kinase which acts as a sensor and effector of intracellular Ca(2+) levels probably in part downstream of cGMP-activated PKG kinase. By phosphorylating various proteins, required for microneme secretion and thus merozoite egress from and invasion of host erythrocytes. During gametogenesis, essential for the development of both male and female gametes. Phosphorylates SERA5 p50 which enhances SERA5 p50 protease activity; however, SERA5 p50 protease activity has been shown in other studies to be controversial. Probably by phosphorylating SERA5 p50, plays a role in merozoite egress from host erythrocytes. Probably prior or during merozoite invasion of host erythrocytes, phosphorylates rhoptry protein RhopH3 which is required for RhopH3 localization to rhoptries and for its secretion. Probably in late schizonts, phosphorylates myosin A tail domain-interacting protein MTIP and glideosome-associated protein 45 GAP45, both of which are components of the motor complex that generates the force required by the parasite to invade host cells. In late schizonts, phosphorylates inner membrane complex protein IMC1g. In late schizonts, phosphorylates PKA regulatory subunit PKAr in a calcium-dependent manner, which may contribute to the dissociation of regulatory PKAr and catalytic PKAc subunits and promote the activation of PKAc. May phosphorylate raf kinase inhibitory protein RKIP which in turn may regulate CDPK1 catalytic activity. May phosphorylate proteins of the host erythrocyte membranes. In Plasmodium falciparum (isolate 3D7), this protein is Calcium-dependent protein kinase 1.